The primary structure comprises 290 residues: Glutamyl-Q tRNA(Asp) synthetase (290 aa).

L-glutamate contacts are provided by residues 9–13 (RFAPS) and E45. The short motif at 12-22 (PSPSGSLHFGS) is the 'HIGH' region element. Zn(2+)-binding residues include C101, C103, Y115, and C119. 2 residues coordinate L-glutamate: Y170 and R188. Positions 226 to 230 (KLSKQ) match the 'KMSKS' region motif. K229 is a binding site for ATP.

It belongs to the class-I aminoacyl-tRNA synthetase family. GluQ subfamily. Requires Zn(2+) as cofactor.

In terms of biological role, catalyzes the tRNA-independent activation of glutamate in presence of ATP and the subsequent transfer of glutamate onto a tRNA(Asp). Glutamate is transferred on the 2-amino-5-(4,5-dihydroxy-2-cyclopenten-1-yl) moiety of the queuosine in the wobble position of the QUC anticodon. This Shewanella amazonensis (strain ATCC BAA-1098 / SB2B) protein is Glutamyl-Q tRNA(Asp) synthetase.